A 121-amino-acid chain; its full sequence is Large ribosomal subunit protein uL18 (121 aa).

The protein belongs to the universal ribosomal protein uL18 family. Part of the 50S ribosomal subunit; part of the 5S rRNA/L5/L18/L25 subcomplex. Contacts the 5S and 23S rRNAs.

This is one of the proteins that bind and probably mediate the attachment of the 5S RNA into the large ribosomal subunit, where it forms part of the central protuberance. The chain is Large ribosomal subunit protein uL18 from Ureaplasma parvum serovar 3 (strain ATCC 27815 / 27 / NCTC 11736).